The following is a 455-amino-acid chain: Mycosin-4 (455 aa).

An N-terminal signal peptide occupies residues 1 to 25; it reads MTTSRTLRLLVVSALATLSGLGTPV. Residues 74–384 form the Peptidase S8 domain; sequence SAQLADLDQV…NGTVDALAAV (311 aa). Active-site charge relay system residues include D98, H129, and S329. The tract at residues 389–417 is disordered; sequence IPQAGTATSDPAPVAVPVPRRSTPGPSDR. The segment covering 394 to 412 has biased composition (low complexity); it reads TATSDPAPVAVPVPRRSTP. Residues 432-452 traverse the membrane as a helical segment; sequence LALMATLATASRRLRPGRNGI.

It belongs to the peptidase S8 family.

It localises to the cell membrane. The protein is Mycosin-4 of Mycobacterium tuberculosis (strain ATCC 25618 / H37Rv).